A 219-amino-acid polypeptide reads, in one-letter code: Probable cutinase 4 (219 aa).

Positions 1 to 17 (MILPSLLVASLSALAAA) are cleaved as a signal peptide. 2 disulfide bridges follow: cysteine 41/cysteine 120 and cysteine 67/cysteine 81. A glycan (N-linked (GlcNAc...) asparagine) is linked at asparagine 99. Residue serine 131 is the Nucleophile of the active site. A disulfide bridge links cysteine 182 with cysteine 189. Residue aspartate 186 is part of the active site. Histidine 199 serves as the catalytic Proton donor/acceptor.

It belongs to the cutinase family.

It is found in the secreted. The catalysed reaction is cutin + H2O = cutin monomers.. Functionally, catalyzes the hydrolysis of complex carboxylic polyesters found in the cell wall of plants. Degrades cutin, a macromolecule that forms the structure of the plant cuticle. The chain is Probable cutinase 4 from Aspergillus terreus (strain NIH 2624 / FGSC A1156).